A 544-amino-acid chain; its full sequence is (E,E)-germacrene B synthase (544 aa).

Positions 296, 300, and 449 each coordinate Mg(2+). A DDXXD motif motif is present at residues 296-300 (DDTFD).

Belongs to the terpene synthase family. Requires Mg(2+) as cofactor. It depends on Mn(2+) as a cofactor.

The protein resides in the cytoplasm. The enzyme catalyses (2E,6E)-farnesyl diphosphate = (1E,4E)-germacrene B + diphosphate. Its pathway is secondary metabolite biosynthesis; terpenoid biosynthesis. Its function is as follows. Involved in the biosynthesis of germacrene B. The sequence is that of (E,E)-germacrene B synthase (SSTLH1) from Solanum habrochaites (Wild tomato).